A 98-amino-acid polypeptide reads, in one-letter code: NADH-ubiquinone oxidoreductase chain 4L (98 aa).

A run of 3 helical transmembrane segments spans residues 1 to 21 (MSMV…GLLV), 30 to 50 (LLCL…TILI), and 61 to 81 (IILL…LVMV).

Belongs to the complex I subunit 4L family. Core subunit of respiratory chain NADH dehydrogenase (Complex I) which is composed of 45 different subunits.

The protein resides in the mitochondrion inner membrane. The catalysed reaction is a ubiquinone + NADH + 5 H(+)(in) = a ubiquinol + NAD(+) + 4 H(+)(out). Core subunit of the mitochondrial membrane respiratory chain NADH dehydrogenase (Complex I) which catalyzes electron transfer from NADH through the respiratory chain, using ubiquinone as an electron acceptor. Part of the enzyme membrane arm which is embedded in the lipid bilayer and involved in proton translocation. The protein is NADH-ubiquinone oxidoreductase chain 4L (MT-ND4L) of Pagophilus groenlandicus (Harp seal).